A 268-amino-acid chain; its full sequence is Ribosomal RNA small subunit methyltransferase A (268 aa).

6 residues coordinate S-adenosyl-L-methionine: Asn16, Leu18, Gly43, Glu64, Asp89, and Asn110.

Belongs to the class I-like SAM-binding methyltransferase superfamily. rRNA adenine N(6)-methyltransferase family. RsmA subfamily.

It localises to the cytoplasm. It carries out the reaction adenosine(1518)/adenosine(1519) in 16S rRNA + 4 S-adenosyl-L-methionine = N(6)-dimethyladenosine(1518)/N(6)-dimethyladenosine(1519) in 16S rRNA + 4 S-adenosyl-L-homocysteine + 4 H(+). Functionally, specifically dimethylates two adjacent adenosines (A1518 and A1519) in the loop of a conserved hairpin near the 3'-end of 16S rRNA in the 30S particle. May play a critical role in biogenesis of 30S subunits. The chain is Ribosomal RNA small subunit methyltransferase A from Pseudomonas savastanoi pv. phaseolicola (strain 1448A / Race 6) (Pseudomonas syringae pv. phaseolicola (strain 1448A / Race 6)).